A 106-amino-acid polypeptide reads, in one-letter code: MNDSEFHRLADQLWLTIEEHLDDWDGDSDIDCEINGGVLTITFENGSKIIINRQEPLHQVWLATKQGGYHFDLKGDEWICDRSGETFWDLLEQAATQQAGETVSFR.

It belongs to the frataxin family.

Its function is as follows. Involved in iron-sulfur (Fe-S) cluster assembly. May act as a regulator of Fe-S biogenesis. The sequence is that of Iron-sulfur cluster assembly protein CyaY from Escherichia coli O127:H6 (strain E2348/69 / EPEC).